The primary structure comprises 307 residues: Pantothenate kinase (307 aa).

90 to 97 (GSVAVGKS) provides a ligand contact to ATP.

It belongs to the prokaryotic pantothenate kinase family.

It is found in the cytoplasm. The catalysed reaction is (R)-pantothenate + ATP = (R)-4'-phosphopantothenate + ADP + H(+). It functions in the pathway cofactor biosynthesis; coenzyme A biosynthesis; CoA from (R)-pantothenate: step 1/5. The sequence is that of Pantothenate kinase from Limosilactobacillus fermentum (strain NBRC 3956 / LMG 18251) (Lactobacillus fermentum).